The primary structure comprises 133 residues: UPF0292 protein TK1411 (133 aa).

The Toprim domain maps to 20–100; that stretch reads EGALIVEGLR…SVDIETWKEL (81 aa). Residues Glu26, Asp69, and Asp71 each contribute to the Mg(2+) site.

Belongs to the UPF0292 family. The cofactor is Mg(2+).

The chain is UPF0292 protein TK1411 from Thermococcus kodakarensis (strain ATCC BAA-918 / JCM 12380 / KOD1) (Pyrococcus kodakaraensis (strain KOD1)).